The sequence spans 25 residues: Alpha-lytic protease (25 aa).

The protein belongs to the peptidase S1 family.

The enzyme catalyses Preferential cleavage: Ala-|-Xaa, Val-|-Xaa in bacterial cell walls, elastin and other proteins.. This is Alpha-lytic protease from Achromobacter lyticus.